The chain runs to 126 residues: Glycine cleavage system H protein (126 aa).

The 82-residue stretch at 24–105 (TLTVGITDHA…AYGVWLFKIK (82 aa)) folds into the Lipoyl-binding domain. Lys-65 carries the post-translational modification N6-lipoyllysine.

Belongs to the GcvH family. As to quaternary structure, the glycine cleavage system is composed of four proteins: P, T, L and H. The cofactor is (R)-lipoate.

The glycine cleavage system catalyzes the degradation of glycine. The H protein shuttles the methylamine group of glycine from the P protein to the T protein. This chain is Glycine cleavage system H protein, found in Burkholderia cenocepacia (strain ATCC BAA-245 / DSM 16553 / LMG 16656 / NCTC 13227 / J2315 / CF5610) (Burkholderia cepacia (strain J2315)).